The chain runs to 155 residues: Small ribosomal subunit protein uS7 (155 aa).

The protein belongs to the universal ribosomal protein uS7 family. As to quaternary structure, part of the 30S ribosomal subunit. Contacts proteins S9 and S11.

One of the primary rRNA binding proteins, it binds directly to 16S rRNA where it nucleates assembly of the head domain of the 30S subunit. Is located at the subunit interface close to the decoding center, probably blocks exit of the E-site tRNA. This Xylella fastidiosa (strain M12) protein is Small ribosomal subunit protein uS7.